Here is a 22-residue protein sequence, read N- to C-terminus: Peroxidase 5 (22 aa).

Belongs to the peroxidase family. Classical plant (class III) peroxidase subfamily. It depends on heme b as a cofactor. Ca(2+) is required as a cofactor.

Its subcellular location is the secreted. It is found in the cell wall. The enzyme catalyses 2 a phenolic donor + H2O2 = 2 a phenolic radical donor + 2 H2O. Removal of H(2)O(2), oxidation of toxic reductants, biosynthesis and degradation of lignin, suberization, auxin catabolism, response to environmental stresses such as wounding, pathogen attack and oxidative stress. These functions might be dependent on each isozyme/isoform in each plant tissue. The sequence is that of Peroxidase 5 from Cycas revoluta (Sago palm).